The chain runs to 502 residues: Intracellular exo-alpha-(1-&gt;5)-L-arabinofuranosidase (502 aa).

Positions 29, 74, and 174 each coordinate alpha-L-arabinofuranose. E175 acts as the Proton donor/acceptor in catalysis. Residues Y246, E294, and Q351 each coordinate alpha-L-arabinofuranose. Residue E294 is the Nucleophile of the active site.

Belongs to the glycosyl hydrolase 51 family. In terms of assembly, homohexamer; trimer of dimers.

It localises to the cytoplasm. It carries out the reaction Hydrolysis of terminal non-reducing alpha-L-arabinofuranoside residues in alpha-L-arabinosides.. It participates in glycan metabolism; L-arabinan degradation. Strongly inhibited by Hg(2+). Functionally, involved in the degradation of arabinan and is a key enzyme in the complete degradation of the plant cell wall. Catalyzes the cleavage of terminal alpha-(1-&gt;5)-arabinofuranosyl bonds in different hemicellulosic homopolysaccharides (branched and debranched arabinans). It acts preferentially on aryl-alpha-L-arabinofuranosides, and is much less effective on aryl-beta-D-xylopyranosides. The protein is Intracellular exo-alpha-(1-&gt;5)-L-arabinofuranosidase (abfA) of Geobacillus stearothermophilus (Bacillus stearothermophilus).